The primary structure comprises 470 residues: Argininosuccinate lyase (470 aa).

It belongs to the lyase 1 family. Argininosuccinate lyase subfamily.

The protein localises to the cytoplasm. The enzyme catalyses 2-(N(omega)-L-arginino)succinate = fumarate + L-arginine. The protein operates within amino-acid biosynthesis; L-arginine biosynthesis; L-arginine from L-ornithine and carbamoyl phosphate: step 3/3. The chain is Argininosuccinate lyase from Leptospira interrogans serogroup Icterohaemorrhagiae serovar copenhageni (strain Fiocruz L1-130).